The primary structure comprises 478 residues: RNA exonuclease 3 (478 aa).

In terms of domain architecture, Exonuclease spans Val-320 to Ile-465.

Belongs to the REXO1/REXO3 family.

The protein localises to the cytoplasm. It localises to the nucleus. Its function is as follows. 3' to 5' exoribonuclease required for proper 3' end maturation of MRP RNA and of the U5L snRNA. This is RNA exonuclease 3 (REX3) from Kluyveromyces lactis (strain ATCC 8585 / CBS 2359 / DSM 70799 / NBRC 1267 / NRRL Y-1140 / WM37) (Yeast).